Reading from the N-terminus, the 190-residue chain is Small ribosomal subunit protein uS4 (190 aa).

The region spanning 105–181 (RRLQTLVYKL…RKKAKAAEGG (77 aa)) is the S4 RNA-binding domain. The interval 163-190 (GGGRPGRVRRKKAKAAEGGDGDAEEDEE) is disordered. A compositionally biased stretch (acidic residues) spans 181-190 (GDGDAEEDEE).

This sequence belongs to the universal ribosomal protein uS4 family.

This chain is Small ribosomal subunit protein uS4 (RPS9), found in Podospora anserina (Pleurage anserina).